We begin with the raw amino-acid sequence, 276 residues long: Bis(5'-nucleosyl)-tetraphosphatase, symmetrical (276 aa).

The protein belongs to the Ap4A hydrolase family.

It catalyses the reaction P(1),P(4)-bis(5'-adenosyl) tetraphosphate + H2O = 2 ADP + 2 H(+). Its function is as follows. Hydrolyzes diadenosine 5',5'''-P1,P4-tetraphosphate to yield ADP. The protein is Bis(5'-nucleosyl)-tetraphosphatase, symmetrical of Mannheimia succiniciproducens (strain KCTC 0769BP / MBEL55E).